An 866-amino-acid polypeptide reads, in one-letter code: E3 ubiquitin-protein ligase RNF216 (866 aa).

Disordered stretches follow at residues 46–117, 131–161, and 211–240; these read LVTP…NPRS, YTESDPLETQNQSSEDSETELLSNLGESAAL, and EFPGPAFPRPEPQQGGISGPSSPQPAHPLG. Over residues 55–76 the composition is skewed to acidic residues; the sequence is EEEDLDDDVILTEDDSEDDYGE. Residues leucine 80, threonine 89, and lysine 100 each participate in a glycyl lysine isopeptide (Lys-Gly) (interchain with G-Cter in SUMO2) cross-link. Residues 137 to 156 are compositionally biased toward polar residues; it reads LETQNQSSEDSETELLSNLG. Glycyl lysine isopeptide (Lys-Gly) (interchain with G-Cter in SUMO2) cross-links involve residues lysine 351 and lysine 354. The residue at position 419 (serine 419) is a Phosphoserine. Glycyl lysine isopeptide (Lys-Gly) (interchain with G-Cter in SUMO2) cross-links involve residues lysine 425, lysine 430, lysine 448, lysine 459, and lysine 485. The stretch at 475 to 491 forms a coiled coil; it reads VQQEQEFYEQKIKEMAE. Positions 511-728 are TRIAD supradomain; it reads QLIECRCCYG…SPGAPCQECS (218 aa). Zn(2+) contacts are provided by cysteine 515, cysteine 518, cysteine 537, cysteine 540, cysteine 605, and cysteine 608. The RING-type 1 zinc finger occupies 515–564; the sequence is CRCCYGEFPFEELTQCADAHLFCKECLIRYAQEAVFGSGKLELSCMEGSC. The IBR-type zinc finger occupies 583 to 648; it reads YKYYERKAEE…LWKEHNGLTC (66 aa). Lysine 619 participates in a covalent cross-link: Glycyl lysine isopeptide (Lys-Gly) (interchain with G-Cter in SUMO2). Positions 623, 628, 633, 636, 643, and 648 each coordinate Zn(2+). Residues lysine 658 and lysine 666 each participate in a glycyl lysine isopeptide (Lys-Gly) (interchain with G-Cter in SUMO2) cross-link. The Zn(2+) site is built by cysteine 675 and cysteine 678. Residues 675–703 form an RING-type 2; atypical zinc finger; sequence CHKCGTGLIKSEGCNRMSCRCGAQMCYLC. The active site involves cysteine 688. 5 residues coordinate Zn(2+): cysteine 693, cysteine 695, cysteine 700, cysteine 703, and histidine 716. Position 719 is a phosphoserine; by MAPK1 (serine 719). Cysteine 724 contributes to the Zn(2+) binding site. A coiled-coil region spans residues 737 to 763; the sequence is TEDDEKLIEEIQKEAEEEQKRKNGENT. Residues lysine 765 and lysine 773 each participate in a glycyl lysine isopeptide (Lys-Gly) (interchain with G-Cter in SUMO2) cross-link.

As to quaternary structure, interacts with UBE2L3 and to some extent with UBE2L6. Interacts with TRAF3, TLR3, TLR4, TLR5 and TLR9. Isoform 3/ZIN binds RIPK1. (Microbial infection) Isoform 3/ZIN binds RIPK1 and HIV Vif. Post-translationally, auto-ubiquitinated. Phosphorylation at Ser-719 enhances acceptor ubiquitin binding and chain-type specificity towards 'Lys-63' di-ubiquitin but not di-ubiquitin with other linkage types. Ubiquitous, with the highest levels of expression in testis and peripheral blood leukocytes.

The protein resides in the cytoplasm. It localises to the cytoplasmic vesicle. The protein localises to the clathrin-coated vesicle. The catalysed reaction is S-ubiquitinyl-[E2 ubiquitin-conjugating enzyme]-L-cysteine + [acceptor protein]-L-lysine = [E2 ubiquitin-conjugating enzyme]-L-cysteine + N(6)-ubiquitinyl-[acceptor protein]-L-lysine.. Its pathway is protein modification; protein ubiquitination. Allosterically activated by 'Lys-63'-linked di-ubiquitin. Its function is as follows. E3 ubiquitin ligase which accepts ubiquitin from specific E2 ubiquitin-conjugating enzymes, and then transfers it to substrates promoting their ubiquitination. Plays a role in the regulation of antiviral responses by promoting the degradation of TRAF3, TLR4 and TLR9. In turn, down-regulates NF-kappa-B and IRF3 activation as well as beta interferon production. Also participates in the regulation of autophagy by ubiquitinating BECN1 leading to its degradation and autophagy inhibition. Plays a role in ARC-dependent synaptic plasticity by mediating ARC ubiquitination resulting in its rapid proteasomal degradation. Plays aso an essential role in spermatogenesis and male fertility. Mechanistically, regulates meiosis by promoting the degradation of PRKACB through the ubiquitin-mediated lysosome pathway. Modulates the gonadotropin-releasing hormone signal pathway by affecting the stability of STAU2 that is required for the microtubule-dependent transport of neuronal RNA from the cell body to the dendrite. In terms of biological role, inhibits TNF and IL-1 mediated activation of NF-kappa-B. Promotes TNF and RIP mediated apoptosis. This is E3 ubiquitin-protein ligase RNF216 (RNF216) from Homo sapiens (Human).